We begin with the raw amino-acid sequence, 492 residues long: Beta-Ala-His dipeptidase (492 aa).

Position 107 (His-107) interacts with Zn(2+). Residue Asp-109 is part of the active site. Asp-140 contributes to the Zn(2+) binding site. The active-site Proton acceptor is the Glu-174. Glu-175 serves as a coordination point for Zn(2+). Ser-194 is modified (phosphoserine). Zn(2+) contacts are provided by Asp-203 and His-453.

This sequence belongs to the peptidase M20A family. Homodimer. The cofactor is Zn(2+). In terms of tissue distribution, detected exclusively in kidney.

Its subcellular location is the secreted. The enzyme catalyses Preferential hydrolysis of the beta-Ala-|-His dipeptide (carnosine), and also anserine, Xaa-|-His dipeptides and other dipeptides including homocarnosine.. It catalyses the reaction carnosine + H2O = beta-alanine + L-histidine. The catalysed reaction is anserine + H2O = N(pros)-methyl-L-histidine + beta-alanine. It carries out the reaction L-alanyl-L-histidine + H2O = L-histidine + L-alanine. The enzyme catalyses glycyl-L-histidine + H2O = L-histidine + glycine. It catalyses the reaction L-homocarnosine + H2O = 4-aminobutanoate + L-histidine. In terms of biological role, catalyzes the peptide bond hydrolysis in Xaa-His dipeptides, displaying the highest activity toward carnosine (beta-alanyl-L-histidine) and anserine (beta-alanyl-3-methyl-histidine). The polypeptide is Beta-Ala-His dipeptidase (Cndp1) (Mus musculus (Mouse)).